Consider the following 117-residue polypeptide: Putative membrane protein insertion efficiency factor (117 aa).

The protein belongs to the UPF0161 family.

It is found in the cell inner membrane. In terms of biological role, could be involved in insertion of integral membrane proteins into the membrane. This is Putative membrane protein insertion efficiency factor from Bartonella henselae (strain ATCC 49882 / DSM 28221 / CCUG 30454 / Houston 1) (Rochalimaea henselae).